A 181-amino-acid chain; its full sequence is Glutamyl-tRNA(Gln) amidotransferase subunit C, chloroplastic/mitochondrial (181 aa).

The protein belongs to the GatC family. Subunit of the heterotrimeric GatCAB amidotransferase (AdT) complex, composed of A, B and C subunits.

Its subcellular location is the mitochondrion. It localises to the plastid. It is found in the chloroplast. It carries out the reaction L-glutamyl-tRNA(Gln) + L-glutamine + ATP + H2O = L-glutaminyl-tRNA(Gln) + L-glutamate + ADP + phosphate + H(+). Its function is as follows. Allows the formation of correctly charged Gln-tRNA(Gln) through the transamidation of misacylated Glu-tRNA(Gln) in chloroplasts and mitochondria. The reaction takes place in the presence of glutamine and ATP through an activated gamma-phospho-Glu-tRNA(Gln). This Picea sitchensis (Sitka spruce) protein is Glutamyl-tRNA(Gln) amidotransferase subunit C, chloroplastic/mitochondrial.